The primary structure comprises 148 residues: Large-conductance mechanosensitive channel (148 aa).

Helical transmembrane passes span 15–35 (LDMAVGVILGASFGTIVKSLV) and 84–104 (VGVFANTVVSFTIVAFAVFLL).

Belongs to the MscL family. Homopentamer.

The protein localises to the cell inner membrane. Functionally, channel that opens in response to stretch forces in the membrane lipid bilayer. May participate in the regulation of osmotic pressure changes within the cell. In Nitratidesulfovibrio vulgaris (strain DSM 19637 / Miyazaki F) (Desulfovibrio vulgaris), this protein is Large-conductance mechanosensitive channel.